A 420-amino-acid chain; its full sequence is C-methyltransferase NovU (420 aa).

It belongs to the methyltransferase superfamily.

It functions in the pathway antibiotic biosynthesis; novobiocin biosynthesis. Functionally, C-methyltransferase that acts together with NovW to catalyze the formation of dTDP-4-keto-6-deoxy-5-C-methyl-L-lyxo-hexose from dTDP-4-keto-6-deoxy-D-glucose in the novobiocin biosynthesis pathway, an aminocoumarin family antibiotic that targets bacterial DNA gyrases. The chain is C-methyltransferase NovU (novU) from Streptomyces niveus (Streptomyces spheroides).